Here is a 553-residue protein sequence, read N- to C-terminus: Arylsulfatase K (553 aa).

A signal peptide spans 1–16; sequence MLLLLVSVVAALALAA. Ca(2+) is bound by residues D40 and C80. Catalysis depends on C80, which acts as the Nucleophile. C80 carries the post-translational modification 3-oxoalanine (Cys). N108 carries N-linked (GlcNAc...) asparagine glycosylation. K128 lines the substrate pocket. N191 carries an N-linked (GlcNAc...) asparagine glycan. H249 serves as a coordination point for substrate. N-linked (GlcNAc...) asparagine glycosylation occurs at N260. 2 residues coordinate Ca(2+): D311 and H312. Residues N373, N411, and N496 are each glycosylated (N-linked (GlcNAc...) asparagine). Positions 530 to 553 are disordered; it reads SPLASSPTQSTSGSQPTLPQSTSG. The span at 534-553 shows a compositional bias: low complexity; sequence SSPTQSTSGSQPTLPQSTSG.

This sequence belongs to the sulfatase family. It depends on Ca(2+) as a cofactor. Post-translationally, the conversion to 3-oxoalanine (also known as C-formylglycine, FGly), of a serine or cysteine residue in prokaryotes and of a cysteine residue in eukaryotes, is critical for catalytic activity. The 75-kDa precursor undergoes proteolytic processing to yield a 23 kDa form. In terms of processing, N-glycosylated with both high mannose and complex type sugars.

It is found in the secreted. Its subcellular location is the lysosome. The enzyme catalyses an aryl sulfate + H2O = a phenol + sulfate + H(+). The catalysed reaction is Hydrolysis of the 2-sulfate groups of the 2-O-sulfo-D-glucuronate residues of chondroitin sulfate, heparin and heparitin sulfate.. Its function is as follows. Catalyzes the hydrolysis of pseudosubstrates such as p-nitrocatechol sulfate and p-nitrophenyl sulfate. Catalyzes the hydrolysis of the 2-sulfate groups of the 2-O-sulfo-D-glucuronate residues of chondroitin sulfate, heparin and heparitin sulfate. Acts selectively on 2-sulfoglucuronate and lacks activity against 2-sulfoiduronate. The sequence is that of Arylsulfatase K (Arsk) from Mus musculus (Mouse).